The primary structure comprises 261 residues: Triosephosphate isomerase (261 aa).

10 to 12 (NWK) contacts substrate. Residue His-100 is the Electrophile of the active site. The active-site Proton acceptor is the Glu-172. Substrate is bound by residues Gly-178, Ser-218, and 239–240 (GG).

The protein belongs to the triosephosphate isomerase family. As to quaternary structure, homodimer.

It is found in the cytoplasm. The catalysed reaction is D-glyceraldehyde 3-phosphate = dihydroxyacetone phosphate. It participates in carbohydrate biosynthesis; gluconeogenesis. It functions in the pathway carbohydrate degradation; glycolysis; D-glyceraldehyde 3-phosphate from glycerone phosphate: step 1/1. In terms of biological role, involved in the gluconeogenesis. Catalyzes stereospecifically the conversion of dihydroxyacetone phosphate (DHAP) to D-glyceraldehyde-3-phosphate (G3P). This chain is Triosephosphate isomerase, found in Mycobacterium marinum (strain ATCC BAA-535 / M).